A 66-amino-acid polypeptide reads, in one-letter code: UPF0370 protein YpfN (66 aa).

A helical transmembrane segment spans residues 4–24; that stretch reads LAKYWWILVLVFLVGVLLNVI. Positions 39 to 66 are disordered; sequence KPELPPHRDFNDKWDDEEDWPKKDQPKK. A compositionally biased stretch (basic and acidic residues) spans 42-51; it reads LPPHRDFNDK.

Belongs to the UPF0370 family.

The protein localises to the cell membrane. This chain is UPF0370 protein YpfN, found in Salmonella paratyphi A (strain AKU_12601).